A 141-amino-acid polypeptide reads, in one-letter code: Hemoglobin subunit alpha (141 aa).

The region spanning 1–141 is the Globin domain; it reads VLSPADKTNI…VSTVLVSKYR (141 aa). Position 3 is a phosphoserine (Ser-3). Residue Lys-7 is modified to N6-succinyllysine. Residue Thr-8 is modified to Phosphothreonine. Lys-11 is subject to N6-succinyllysine. Lys-16 carries the post-translational modification N6-acetyllysine; alternate. Lys-16 is subject to N6-succinyllysine; alternate. Tyr-24 carries the post-translational modification Phosphotyrosine. Ser-35 bears the Phosphoserine mark. Lys-40 is modified (N6-succinyllysine). Position 49 is a phosphoserine (Ser-49). O2 is bound at residue His-58. A heme b-binding site is contributed by His-87. Ser-102 carries the phosphoserine modification. Thr-108 is subject to Phosphothreonine. Residues Ser-124 and Ser-131 each carry the phosphoserine modification. Position 134 is a phosphothreonine (Thr-134). A Phosphoserine modification is found at Ser-138.

The protein belongs to the globin family. In terms of assembly, heterotetramer of two alpha chains and two beta chains. As to expression, red blood cells.

Involved in oxygen transport from the lung to the various peripheral tissues. Its function is as follows. Hemopressin acts as an antagonist peptide of the cannabinoid receptor CNR1. Hemopressin-binding efficiently blocks cannabinoid receptor CNR1 and subsequent signaling. The polypeptide is Hemoglobin subunit alpha (HBA) (Myotis velifer (Mouse-eared bat)).